The chain runs to 410 residues: Phosphopentomutase (410 aa).

D10, D309, H314, D350, H351, and H362 together coordinate Mn(2+).

The protein belongs to the phosphopentomutase family. The cofactor is Mn(2+).

Its subcellular location is the cytoplasm. It carries out the reaction 2-deoxy-alpha-D-ribose 1-phosphate = 2-deoxy-D-ribose 5-phosphate. It catalyses the reaction alpha-D-ribose 1-phosphate = D-ribose 5-phosphate. Its pathway is carbohydrate degradation; 2-deoxy-D-ribose 1-phosphate degradation; D-glyceraldehyde 3-phosphate and acetaldehyde from 2-deoxy-alpha-D-ribose 1-phosphate: step 1/2. In terms of biological role, isomerase that catalyzes the conversion of deoxy-ribose 1-phosphate (dRib-1-P) and ribose 1-phosphate (Rib-1-P) to deoxy-ribose 5-phosphate (dRib-5-P) and ribose 5-phosphate (Rib-5-P), respectively. The chain is Phosphopentomutase from Aliivibrio fischeri (strain ATCC 700601 / ES114) (Vibrio fischeri).